The sequence spans 376 residues: Succinyl-diaminopimelate desuccinylase (376 aa).

Histidine 67 contacts Zn(2+). Residue aspartate 69 is part of the active site. Position 100 (aspartate 100) interacts with Zn(2+). The Proton acceptor role is filled by glutamate 134. The Zn(2+) site is built by glutamate 135, glutamate 163, and histidine 349.

This sequence belongs to the peptidase M20A family. DapE subfamily. As to quaternary structure, homodimer. The cofactor is Zn(2+). Co(2+) serves as cofactor.

The enzyme catalyses N-succinyl-(2S,6S)-2,6-diaminopimelate + H2O = (2S,6S)-2,6-diaminopimelate + succinate. It participates in amino-acid biosynthesis; L-lysine biosynthesis via DAP pathway; LL-2,6-diaminopimelate from (S)-tetrahydrodipicolinate (succinylase route): step 3/3. Its function is as follows. Catalyzes the hydrolysis of N-succinyl-L,L-diaminopimelic acid (SDAP), forming succinate and LL-2,6-diaminopimelate (DAP), an intermediate involved in the bacterial biosynthesis of lysine and meso-diaminopimelic acid, an essential component of bacterial cell walls. The polypeptide is Succinyl-diaminopimelate desuccinylase (Haemophilus ducreyi (strain 35000HP / ATCC 700724)).